A 401-amino-acid chain; its full sequence is Protein KlcB (401 aa).

Residues 253–311 (AARSNAKGKAGGRERDPASAETAMRCSTAKADDCKAEAGPVSPEATMPGAGEASCSTAR) are disordered.

This is Protein KlcB (klcB) from Escherichia coli.